The primary structure comprises 375 residues: Pulmonary surfactant-associated protein D (375 aa).

The first 20 residues, 1-20 (MLLFLLSALVLLTQPLGYLE), serve as a signal peptide directing secretion. 2 positions are modified to S-nitrosocysteine: Cys35 and Cys40. The disordered stretch occupies residues 45–221 (SGLPGRDGRD…DKGAKGESGL (177 aa)). Positions 46–222 (GLPGRDGRDG…KGAKGESGLP (177 aa)) constitute a Collagen-like domain. Residues 50-65 (RDGRDGREGPRGEKGD) show a composition bias toward basic and acidic residues. Residues 66–86 (PGLPGAAGQAGMPGQAGPVGP) show a composition bias toward low complexity. The residue at position 78 (Pro78) is a 4-hydroxyproline. At Lys87 the chain carries 5-hydroxylysine. Asn90 is a glycosylation site (N-linked (GlcNAc...) asparagine). At Pro96 the chain carries 4-hydroxyproline. Lys99 carries the 5-hydroxylysine modification. The segment covering 105 to 114 (SGPPGPPGVP) has biased composition (pro residues). Low complexity-rich tracts occupy residues 116–132 (PAGREGPLGKQGNIGPQ) and 138–150 (KGEAGPKGEVGAP). 4-hydroxyproline is present on residues Pro171 and Pro177. Residues 204–216 (KGDKGIPGDKGAK) are compositionally biased toward basic and acidic residues. A coiled-coil region spans residues 223 to 252 (DVASLRQQVEALQGQVQHLQAAFSQYKKVE). The region spanning 260–375 (VGEKIFKTAG…GEKRLVVCEF (116 aa)) is the C-type lectin domain. 2 disulfide bridges follow: Cys281–Cys373 and Cys351–Cys365.

The protein belongs to the SFTPD family. In terms of assembly, oligomeric complex of 4 set of homotrimers. Post-translationally, the N-terminus is blocked. Hydroxylation on proline residues within the sequence motif, GXPG, is most likely to be 4-hydroxy as this fits the requirement for 4-hydroxylation in vertebrates. In terms of processing, S-nitrosylation at Cys-35 and Cys-40 alters the quaternary structure which results in a pro-inflammatory chemoattractive signaling activity with macrophages. As to expression, expressed in lung, brain, pancreas and adipose tissue (mainly mature adipocytes).

The protein resides in the secreted. The protein localises to the extracellular space. It localises to the extracellular matrix. Its subcellular location is the surface film. Functionally, contributes to the lung's defense against inhaled microorganisms, organic antigens and toxins. Interacts with compounds such as bacterial lipopolysaccharides, oligosaccharides and fatty acids and modulates leukocyte action in immune response. May participate in the extracellular reorganization or turnover of pulmonary surfactant. Binds strongly maltose residues and to a lesser extent other alpha-glucosyl moieties. In Homo sapiens (Human), this protein is Pulmonary surfactant-associated protein D (SFTPD).